A 285-amino-acid polypeptide reads, in one-letter code: SLAM family member 9 (285 aa).

The signal sequence occupies residues 1 to 17 (MGALLWSLLLLLQEAKG). The Extracellular portion of the chain corresponds to 18–232 (FSGDDEDPEE…YPEKPSMLCL (215 aa)). The region spanning 25 to 126 (PEEVIGVLQE…SHITKSYHLR (102 aa)) is the Ig-like V-type domain. Residues Asn37, Asn97, Asn141, Asn149, Asn175, and Asn206 are each glycosylated (N-linked (GlcNAc...) asparagine). The Ig-like C2-type domain occupies 134-213 (PHITVNSNIS…VSNISSRRIS (80 aa)). Cys154 and Cys198 are disulfide-bonded. Residues 233–253 (LVKSLFLLLLLAILTVGLCLF) traverse the membrane as a helical segment. The Cytoplasmic portion of the chain corresponds to 254 to 285 (RAQKSYETPRVRKLKRNRIKLRKKGKSGPTPV).

Its subcellular location is the membrane. Functionally, may play a role in the immune response. The sequence is that of SLAM family member 9 (Slamf9) from Mus musculus (Mouse).